A 426-amino-acid chain; its full sequence is 3-phosphoshikimate 1-carboxyvinyltransferase (426 aa).

3-phosphoshikimate contacts are provided by Lys-22, Ser-23, and Arg-27. Position 22 (Lys-22) interacts with phosphoenolpyruvate. Residues Gly-96 and Arg-124 each contribute to the phosphoenolpyruvate site. 7 residues coordinate 3-phosphoshikimate: Ser-170, Ser-171, Gln-172, Ser-198, Asp-314, Asn-337, and Lys-341. Position 172 (Gln-172) interacts with phosphoenolpyruvate. The Proton acceptor role is filled by Asp-314. Phosphoenolpyruvate contacts are provided by Arg-345, Arg-387, and Lys-412.

The protein belongs to the EPSP synthase family. As to quaternary structure, monomer.

The protein resides in the cytoplasm. It carries out the reaction 3-phosphoshikimate + phosphoenolpyruvate = 5-O-(1-carboxyvinyl)-3-phosphoshikimate + phosphate. It participates in metabolic intermediate biosynthesis; chorismate biosynthesis; chorismate from D-erythrose 4-phosphate and phosphoenolpyruvate: step 6/7. Its function is as follows. Catalyzes the transfer of the enolpyruvyl moiety of phosphoenolpyruvate (PEP) to the 5-hydroxyl of shikimate-3-phosphate (S3P) to produce enolpyruvyl shikimate-3-phosphate and inorganic phosphate. The chain is 3-phosphoshikimate 1-carboxyvinyltransferase from Shewanella woodyi (strain ATCC 51908 / MS32).